The following is a 615-amino-acid chain: Ankyrin repeat and LEM domain-containing protein 1 (615 aa).

3 ANK repeats span residues 39 to 71 (DGAAAVHLAAGARHPRGLRCLGALLRQGGDPNA), 75 to 104 (EALTPLHVAAAWGCRRGLELLLSQGADPAL), and 108 to 137 (DGLRPLDLALQQGHLECARVLQDLDTRTRT). The disordered stretch occupies residues 138 to 210 (RTRIGAETQE…DKHGSSASPP (73 aa)). The Nuclear export signal motif lies at 271–280 (LNARLQALTL). A compositionally biased stretch (polar residues) spans 283 to 294 (PNAAGFQSSPSS). A disordered region spans residues 283–315 (PNAAGFQSSPSSMPLLDRSPAHSPPRTPTPGAS). An LEM domain is found at 355–399 (HLPVSTVSDLELLKGLRALGENPHPITPFTRQLYHQQLEEAQIAP). The 119-residue stretch at 448–566 (KSSFTYLLLD…ALGIQTLTNQ (119 aa)) folds into the GIY-YIG domain. A Nuclear localization signal motif is present at residues 579–586 (PPARRRRL).

Interacts (via LEM domain) with BANF1; the interaction may favor BANF1 dimerization. As to expression, expression is predominant in adult bone marrow.

The protein localises to the cytoplasm. The protein resides in the nucleus. Functionally, endonuclease that probably plays a role in the DNA damage response and DNA repair. This is Ankyrin repeat and LEM domain-containing protein 1 (ANKLE1) from Homo sapiens (Human).